Here is a 386-residue protein sequence, read N- to C-terminus: Acetate kinase (386 aa).

Mg(2+) is bound at residue Asn-9. ATP is bound at residue Lys-16. Arg-74 contacts substrate. The active-site Proton donor/acceptor is Asp-131. ATP is bound by residues 191 to 195 (HLGNG), 265 to 267 (DFR), and 313 to 317 (GVGEN). Glu-367 is a binding site for Mg(2+).

Belongs to the acetokinase family. As to quaternary structure, homodimer. It depends on Mg(2+) as a cofactor. Requires Mn(2+) as cofactor.

It is found in the cytoplasm. It carries out the reaction acetate + ATP = acetyl phosphate + ADP. Its pathway is metabolic intermediate biosynthesis; acetyl-CoA biosynthesis; acetyl-CoA from acetate: step 1/2. Catalyzes the formation of acetyl phosphate from acetate and ATP. Can also catalyze the reverse reaction. This Mycolicibacterium gilvum (strain PYR-GCK) (Mycobacterium gilvum (strain PYR-GCK)) protein is Acetate kinase.